Reading from the N-terminus, the 84-residue chain is Molybdopterin synthase sulfur carrier subunit (84 aa).

Gly-84 is subject to 1-thioglycine; alternate. Gly-84 is subject to Glycyl adenylate; alternate.

Belongs to the MoaD family. MOCS2A subfamily. As to quaternary structure, heterotetramer; composed of 2 small (MOCS2A) and 2 large (MOCS2B) subunits. In terms of processing, C-terminal thiocarboxylation occurs in 2 steps, it is first acyl-adenylated (-COAMP) via the hesA/moeB/thiF part of MOCS3, then thiocarboxylated (-COSH) via the rhodanese domain of MOCS3.

Its subcellular location is the cytoplasm. Its pathway is cofactor biosynthesis; molybdopterin biosynthesis. Functionally, acts as a sulfur carrier required for molybdopterin biosynthesis. Component of the molybdopterin synthase complex that catalyzes the conversion of precursor Z into molybdopterin by mediating the incorporation of 2 sulfur atoms into precursor Z to generate a dithiolene group. In the complex, serves as sulfur donor by being thiocarboxylated (-COSH) at its C-terminus by MOCS3. After interaction with MOCS2B, the sulfur is then transferred to precursor Z to form molybdopterin. This Caenorhabditis elegans protein is Molybdopterin synthase sulfur carrier subunit.